Reading from the N-terminus, the 110-residue chain is Insulin (110 aa).

An N-terminal signal peptide occupies residues 1-24; that stretch reads MALWMRLLPLLVLLALWGPDPASA. Disulfide bonds link Cys31/Cys96, Cys43/Cys109, and Cys95/Cys100. A propeptide spans 57–87 (c peptide); sequence EAEDLQVGQVELGGGPGAGSLQPLALEGSLQ.

This sequence belongs to the insulin family. In terms of assembly, heterodimer of a B chain and an A chain linked by two disulfide bonds.

It localises to the secreted. Its function is as follows. Insulin decreases blood glucose concentration. It increases cell permeability to monosaccharides, amino acids and fatty acids. It accelerates glycolysis, the pentose phosphate cycle, and glycogen synthesis in liver. The chain is Insulin (INS) from Pan troglodytes (Chimpanzee).